Consider the following 304-residue polypeptide: tRNA pseudouridine synthase B (304 aa).

The active-site Nucleophile is D38.

It belongs to the pseudouridine synthase TruB family. Type 1 subfamily.

The enzyme catalyses uridine(55) in tRNA = pseudouridine(55) in tRNA. Functionally, responsible for synthesis of pseudouridine from uracil-55 in the psi GC loop of transfer RNAs. The polypeptide is tRNA pseudouridine synthase B (Listeria monocytogenes serotype 4b (strain F2365)).